A 474-amino-acid polypeptide reads, in one-letter code: Phenylalanine--tRNA ligase alpha subunit (474 aa).

L-phenylalanine contacts are provided by residues Thr-317, 356–358 (QLE), and Tyr-396. Glu-398 contacts Mg(2+). Phe-421 contributes to the L-phenylalanine binding site.

It belongs to the class-II aminoacyl-tRNA synthetase family. Phe-tRNA synthetase alpha subunit type 2 subfamily. In terms of assembly, tetramer of two alpha and two beta subunits. The cofactor is Mg(2+).

Its subcellular location is the cytoplasm. It carries out the reaction tRNA(Phe) + L-phenylalanine + ATP = L-phenylalanyl-tRNA(Phe) + AMP + diphosphate + H(+). This is Phenylalanine--tRNA ligase alpha subunit from Archaeoglobus fulgidus (strain ATCC 49558 / DSM 4304 / JCM 9628 / NBRC 100126 / VC-16).